The sequence spans 400 residues: Nicotinate phosphoribosyltransferase (400 aa).

Residue histidine 220 is modified to Phosphohistidine; by autocatalysis.

Belongs to the NAPRTase family. Post-translationally, transiently phosphorylated on a His residue during the reaction cycle. Phosphorylation strongly increases the affinity for substrates and increases the rate of nicotinate D-ribonucleotide production. Dephosphorylation regenerates the low-affinity form of the enzyme, leading to product release.

The enzyme catalyses nicotinate + 5-phospho-alpha-D-ribose 1-diphosphate + ATP + H2O = nicotinate beta-D-ribonucleotide + ADP + phosphate + diphosphate. Its pathway is cofactor biosynthesis; NAD(+) biosynthesis; nicotinate D-ribonucleotide from nicotinate: step 1/1. Catalyzes the synthesis of beta-nicotinate D-ribonucleotide from nicotinate and 5-phospho-D-ribose 1-phosphate at the expense of ATP. This Escherichia coli O127:H6 (strain E2348/69 / EPEC) protein is Nicotinate phosphoribosyltransferase.